Reading from the N-terminus, the 572-residue chain is MGFRINTNIGALNAHANSVVNARELDKSLSRLSSGLRINSAADDASGMAIADSLRSQAATLGQAINNGNDAIGILQTADKAMDEQLKILDTIKTKATQAAQDGQSLKTRTMLQADINRLMEELDNIANTTSFNGKQLLSGNFINQEFQIGASSNQTIKATIGATQSSKIGLTRFETGGRISSSGEVQFTLKNYNGIDDFQFQKVVISTSVGTGLGALAEEINKSADKTGVRATFTVETRGIAAVRAGTTSDTFAINGVTIGQVAYEDGDGNGALVAAINSVKDTTGVEASIDANGQLLLTSREGRGIKIDGNIGGGAFINADMKENYGRLSLVKNDGKDILISGSNLSSAGFGATQFISQASVSLRESKGRFDANIADAMGFGSANKGVVLGGYSSVSAYMSSAGSGFSSGSGYSVGSGKNYSTGFANAIAISAASQLSTVYNVSAGSGFSSGSTLSQFATMKTTAFGVKDETAGVTTLKGAMAVMDIAETATTNLDQIRADIGSVQNQLQVTINNITVTQVNVKAAESTIRDVDFAAESANFSKYNILAQSGSYAMSQANAVQQNVLKLLQ.

It belongs to the bacterial flagellin family. In terms of assembly, heteromer of flaA and flaB.

It is found in the secreted. The protein localises to the bacterial flagellum. In terms of biological role, flagellin is the subunit protein which polymerizes to form the filaments of bacterial flagella. In Campylobacter jejuni subsp. jejuni serotype O:2 (strain ATCC 700819 / NCTC 11168), this protein is Flagellin B (flaB).